A 409-amino-acid polypeptide reads, in one-letter code: Gamma-glutamyl phosphate reductase (409 aa).

This sequence belongs to the gamma-glutamyl phosphate reductase family.

Its subcellular location is the cytoplasm. The enzyme catalyses L-glutamate 5-semialdehyde + phosphate + NADP(+) = L-glutamyl 5-phosphate + NADPH + H(+). Its pathway is amino-acid biosynthesis; L-proline biosynthesis; L-glutamate 5-semialdehyde from L-glutamate: step 2/2. In terms of biological role, catalyzes the NADPH-dependent reduction of L-glutamate 5-phosphate into L-glutamate 5-semialdehyde and phosphate. The product spontaneously undergoes cyclization to form 1-pyrroline-5-carboxylate. This is Gamma-glutamyl phosphate reductase from Koribacter versatilis (strain Ellin345).